The chain runs to 260 residues: Sugar fermentation stimulation protein homolog (260 aa).

This sequence belongs to the SfsA family.

This is Sugar fermentation stimulation protein homolog from Chloroflexus aggregans (strain MD-66 / DSM 9485).